We begin with the raw amino-acid sequence, 108 residues long: Urease subunit gamma (108 aa).

This sequence belongs to the urease gamma subunit family. In terms of assembly, heterotrimer of UreA (gamma), UreB (beta) and UreC (alpha) subunits. Three heterotrimers associate to form the active enzyme.

It localises to the cytoplasm. It carries out the reaction urea + 2 H2O + H(+) = hydrogencarbonate + 2 NH4(+). Its pathway is nitrogen metabolism; urea degradation; CO(2) and NH(3) from urea (urease route): step 1/1. The sequence is that of Urease subunit gamma from Trichodesmium erythraeum (strain IMS101).